Here is a 461-residue protein sequence, read N- to C-terminus: tRNA modification GTPase MnmE (461 aa).

Residues R27, E89, and R128 each coordinate (6S)-5-formyl-5,6,7,8-tetrahydrofolate. Residues 224–382 (GLATAIVGQP…LEELINKLFF (159 aa)) enclose the TrmE-type G domain. N234 serves as a coordination point for K(+). GTP contacts are provided by residues 234–239 (NVGKSS), 253–259 (TDVAGTT), and 278–281 (DTAG). Residue S238 participates in Mg(2+) binding. The K(+) site is built by T253, V255, and T258. T259 is a Mg(2+) binding site. A (6S)-5-formyl-5,6,7,8-tetrahydrofolate-binding site is contributed by K461.

This sequence belongs to the TRAFAC class TrmE-Era-EngA-EngB-Septin-like GTPase superfamily. TrmE GTPase family. Homodimer. Heterotetramer of two MnmE and two MnmG subunits. K(+) is required as a cofactor.

It is found in the cytoplasm. Its function is as follows. Exhibits a very high intrinsic GTPase hydrolysis rate. Involved in the addition of a carboxymethylaminomethyl (cmnm) group at the wobble position (U34) of certain tRNAs, forming tRNA-cmnm(5)s(2)U34. This chain is tRNA modification GTPase MnmE, found in Lactobacillus acidophilus (strain ATCC 700396 / NCK56 / N2 / NCFM).